The sequence spans 178 residues: Actin-related protein 2/3 complex subunit 3-B (178 aa).

Belongs to the ARPC3 family. In terms of assembly, component of the Arp2/3 complex composed of actr2/arp2, actr3/arp3, arpc1 (arpc1a or arpc1b), arpc2, arpc3, arpc4 and arpc5.

It is found in the cytoplasm. The protein localises to the cytoskeleton. The protein resides in the cell projection. It localises to the nucleus. In terms of biological role, component of the Arp2/3 complex, a multiprotein complex that mediates actin polymerization upon stimulation by nucleation-promoting factor (NPF). The Arp2/3 complex mediates the formation of branched actin networks in the cytoplasm, providing the force for cell motility. In addition to its role in the cytoplasmic cytoskeleton, the Arp2/3 complex also promotes actin polymerization in the nucleus, thereby regulating gene transcription and repair of damaged DNA. The Arp2/3 complex promotes homologous recombination (HR) repair in response to DNA damage by promoting nuclear actin polymerization, leading to drive motility of double-strand breaks (DSBs). This is Actin-related protein 2/3 complex subunit 3-B (arpc3-b) from Xenopus laevis (African clawed frog).